The following is a 439-amino-acid chain: Xylose isomerase (439 aa).

Catalysis depends on residues His101 and Asp104. 7 residues coordinate Mg(2+): Glu232, Glu268, His271, Asp296, Asp307, Asp309, and Asp339.

It belongs to the xylose isomerase family. Homotetramer. Requires Mg(2+) as cofactor.

It localises to the cytoplasm. The enzyme catalyses alpha-D-xylose = alpha-D-xylulofuranose. This Pectobacterium atrosepticum (strain SCRI 1043 / ATCC BAA-672) (Erwinia carotovora subsp. atroseptica) protein is Xylose isomerase.